A 185-amino-acid chain; its full sequence is Probable nicotinate-nucleotide adenylyltransferase (185 aa).

Belongs to the NadD family.

It carries out the reaction nicotinate beta-D-ribonucleotide + ATP + H(+) = deamido-NAD(+) + diphosphate. Its pathway is cofactor biosynthesis; NAD(+) biosynthesis; deamido-NAD(+) from nicotinate D-ribonucleotide: step 1/1. Catalyzes the reversible adenylation of nicotinate mononucleotide (NaMN) to nicotinic acid adenine dinucleotide (NaAD). In Cereibacter sphaeroides (strain ATCC 17025 / ATH 2.4.3) (Rhodobacter sphaeroides), this protein is Probable nicotinate-nucleotide adenylyltransferase.